The following is a 344-amino-acid chain: uncharacterized protein (344 aa).

NADP(+)-binding residues include Lys38 and Tyr167.

Belongs to the NAD(P)-dependent epimerase/dehydratase family. Dihydroflavonol-4-reductase subfamily.

This is an uncharacterized protein from Saccharomyces cerevisiae (strain ATCC 204508 / S288c) (Baker's yeast).